The following is a 323-amino-acid chain: uncharacterized protein (323 aa).

Y59 (proton donor) is an active-site residue. 198–208 (SPLAQGLLGGK) contacts NADP(+).

It belongs to the aldo/keto reductase family. Aldo/keto reductase 2 subfamily.

This is an uncharacterized protein from Mycobacterium tuberculosis (strain CDC 1551 / Oshkosh).